The sequence spans 575 residues: Serine/threonine-protein phosphatase 2A regulatory subunit B'' subunit beta (575 aa).

Positions 41–131 (APGRDQPTPG…SQSIPTFYFP (91 aa)) are disordered. One can recognise an EF-hand domain in the interval 388–423 (KTPTSIEYWFRCMDLDGDGALSMFELEYFYEEQCRR). Residues D401, D403, D405, and E412 each contribute to the Ca(2+) site.

As to quaternary structure, PP2A consists of a common heterodimeric core enzyme, composed of a 36 kDa catalytic subunit (subunit C) and a 65 kDa constant regulatory subunit (PR65 or subunit A), that associates with a variety of regulatory subunits. Proteins that associate with the core dimer include three families of regulatory subunits B (the R2/B/PR55/B55, R3/B''/PR72/PR130/PR59 and R5/B'/B56 families), the 48 kDa variable regulatory subunit, viral proteins, and cell signaling molecules. Interacts with N-terminal region of CDC6. Interacts with NOD2.

The protein resides in the nucleus. Functionally, the B regulatory subunit might modulate substrate selectivity and catalytic activity, and might also direct the localization of the catalytic enzyme to a particular subcellular compartment. The polypeptide is Serine/threonine-protein phosphatase 2A regulatory subunit B'' subunit beta (PPP2R3B) (Homo sapiens (Human)).